We begin with the raw amino-acid sequence, 84 residues long: Small ribosomal subunit protein bS20 (84 aa).

Positions 1-25 are disordered; that stretch reads MANIVSNEKTYRHTQKVRKENHAKM.

Belongs to the bacterial ribosomal protein bS20 family.

Binds directly to 16S ribosomal RNA. The protein is Small ribosomal subunit protein bS20 of Ureaplasma urealyticum serovar 10 (strain ATCC 33699 / Western).